Consider the following 287-residue polypeptide: Polyamine aminopropyltransferase (287 aa).

The 234-residue stretch at 9 to 242 folds into the PABS domain; the sequence is GSWLDEYQND…GIWSWTFASI (234 aa). Position 36 (Q36) interacts with S-methyl-5'-thioadenosine. The spermidine site is built by H67 and D91. Residues E111 and 143 to 144 each bind S-methyl-5'-thioadenosine; that span reads NG. Residue D162 is the Proton acceptor of the active site. Position 169 (P169) interacts with S-methyl-5'-thioadenosine.

The protein belongs to the spermidine/spermine synthase family. Homodimer or homotetramer.

The protein localises to the cytoplasm. It carries out the reaction S-adenosyl 3-(methylsulfanyl)propylamine + putrescine = S-methyl-5'-thioadenosine + spermidine + H(+). Its pathway is amine and polyamine biosynthesis; spermidine biosynthesis; spermidine from putrescine: step 1/1. Functionally, catalyzes the irreversible transfer of a propylamine group from the amino donor S-adenosylmethioninamine (decarboxy-AdoMet) to putrescine (1,4-diaminobutane) to yield spermidine. The sequence is that of Polyamine aminopropyltransferase from Prochlorococcus marinus (strain SARG / CCMP1375 / SS120).